Reading from the N-terminus, the 138-residue chain is MPNFSGNWKIIRSENFEELLKVLGVNVMLRKIAVAAASKPAVEIKQEGDTFYIKTSTTVRTTEINFKVGEEFEEQTVDGRPCKSLVKWESENKMVCEQKLLKGEGPKTSWTRELTNDGELILTMTADDVVCTRVYVRE.

A Nuclear localization signal motif is present at residues 21 to 31 (KVLGVNVMLRK). A Glycyl lysine isopeptide (Lys-Gly) (interchain with G-Cter in SUMO) cross-link involves residue Lys102. 133-135 (RVY) lines the all-trans-retinoate pocket.

The protein belongs to the calycin superfamily. Fatty-acid binding protein (FABP) family. In terms of assembly, interacts with RXR and RARA. Interacts with importin alpha. Post-translationally, sumoylated in response to retinoic acid binding, sumoylation is critical for dissociation from ER and subsequent nuclear translocation.

The protein resides in the cytoplasm. It localises to the endoplasmic reticulum. Its subcellular location is the nucleus. Its function is as follows. Transports retinoic acid to the nucleus. Regulates the access of retinoic acid to the nuclear retinoic acid receptors. The polypeptide is Cellular retinoic acid-binding protein 2 (CRABP2) (Homo sapiens (Human)).